Here is a 103-residue protein sequence, read N- to C-terminus: MIVTTTSGIQGKEIIDYIDIVNGEAIMGANIVRDLFASVRDVVGGRAGSYESKLKEARDIAMDEMKELAKQKGANAIVGIDVDYEVVRDGMLMVAVSGTAVRI.

This sequence belongs to the UPF0145 family.

The polypeptide is UPF0145 protein BT9727_3206 (Bacillus thuringiensis subsp. konkukian (strain 97-27)).